The following is a 362-amino-acid chain: ATP synthase F(1) complex catalytic subunit beta, mitochondrial (362 aa).

An N6-acetyllysine; alternate modification is found at K14. K14 is subject to N6-succinyllysine; alternate. At K51 the chain carries N6-acetyllysine. ADP-binding residues include V62, V63, G64, K65, T66, and V67. V62 contacts ATP. Phosphate is bound by residues V62, V63, G64, K65, and T66. ATP-binding residues include G64, K65, T66, and V67. Residue T66 participates in Mg(2+) binding. E91 is a Mg(2+) binding site. An N6-acetyllysine; alternate mark is found at K112 and K117. N6-succinyllysine; alternate occurs at positions 112 and 117. Residue T165 is modified to Phosphothreonine. K279 carries the N6-acetyllysine modification. A Phosphoserine modification is found at S286. K333 and K338 each carry N6-acetyllysine.

This sequence belongs to the ATPase alpha/beta chains family. Homotrimer. Component of the ATP synthase complex composed at least of ATP5F1A/subunit alpha, ATP5F1B/subunit beta, ATP5MC1/subunit c (homooctomer), MT-ATP6/subunit a, MT-ATP8/subunit 8, ATP5ME/subunit e, ATP5MF/subunit f, ATP5MG/subunit g, ATP5MK/subunit k, ATP5MJ/subunit j, ATP5F1C/subunit gamma, ATP5F1D/subunit delta, ATP5F1E/subunit epsilon, ATP5PF/subunit F6, ATP5PB/subunit b, ATP5PD/subunit d, ATP5PO/subunit OSCP. ATP synthase complex consists of a soluble F(1) head domain (subunits alpha(3) and beta(3)) - the catalytic core - and a membrane F(0) domain - the membrane proton channel (subunits c, a, 8, e, f, g, k and j). These two domains are linked by a central stalk (subunits gamma, delta, and epsilon) rotating inside the F1 region and a stationary peripheral stalk (subunits F6, b, d, and OSCP). Interacts with PPIF. Interacts with BCL2L1 isoform BCL-X(L); the interaction mediates the association of BCL2L1 isoform BCL-X(L) with the mitochondrial membrane F(1)F(0) ATP synthase and enhances neurons metabolic efficiency. Interacts with CLN5 and PPT1. Interacts with S100A1; this interaction increases F1-ATPase activity. Interacts with MTLN. Interacts with TTC5/STRAP; the interaction results in decreased mitochondrial ATP production.

It localises to the mitochondrion inner membrane. The enzyme catalyses ATP + H2O + 4 H(+)(in) = ADP + phosphate + 5 H(+)(out). In terms of biological role, catalytic subunit beta, of the mitochondrial membrane ATP synthase complex (F(1)F(0) ATP synthase or Complex V) that produces ATP from ADP in the presence of a proton gradient across the membrane which is generated by electron transport complexes of the respiratory chain. ATP synthase complex consist of a soluble F(1) head domain - the catalytic core - and a membrane F(1) domain - the membrane proton channel. These two domains are linked by a central stalk rotating inside the F(1) region and a stationary peripheral stalk. During catalysis, ATP synthesis in the catalytic domain of F(1) is coupled via a rotary mechanism of the central stalk subunits to proton translocation. In vivo, can only synthesize ATP although its ATP hydrolase activity can be activated artificially in vitro. With the subunit alpha (ATP5F1A), forms the catalytic core in the F(1) domain. The polypeptide is ATP synthase F(1) complex catalytic subunit beta, mitochondrial (Mesocricetus auratus (Golden hamster)).